The sequence spans 385 residues: GDP-D-glucose phosphorylase 1 (385 aa).

Histidine 218 functions as the Tele-GMP-histidine intermediate in the catalytic mechanism.

The protein belongs to the GDPGP1 family.

It is found in the cytoplasm. The catalysed reaction is GDP-alpha-D-glucose + phosphate = alpha-D-glucose 1-phosphate + GDP + H(+). Its function is as follows. Specific and highly efficient GDP-D-glucose phosphorylase regulating the levels of GDP-D-glucose in cells. The protein is GDP-D-glucose phosphorylase 1 (GDPGP1) of Homo sapiens (Human).